We begin with the raw amino-acid sequence, 299 residues long: Non-structural protein V (299 aa).

A disordered region spans residues 40–91 (SDNPGQERATYKEEKAGGSGLSKPCLSAIGSTEGGAPRIRGQGSGESDDDTE). Positions 110-120 (HYVYDHSGEAV) are interaction with host STAT1. Residues 133 to 163 (SGLDGDSTLSEGDNESENSDVDIGEPDTEGY) form a disordered region. A compositionally biased stretch (acidic residues) spans 144–160 (GDNESENSDVDIGEPDT). Zn(2+) is bound by residues H232, C251, C255, C267, C269, C272, C276, and C279.

The protein belongs to the paramyxoviruses V protein family. Interacts with host IFIH1/MDA5 and DHX58/LGP2; these interactions are involved in the inhibition of the host type I interferon signaling pathway. Interacts with host TYK2; this interaction inhibits the type I interferon signaling pathway without affecting the type II pathway. Interacts with host IRF7; this interaction inhibits IRF7 translocation to the nucleus. Interacts with host CHUK. Interacts with host RELA/p65; this interaction inhibits the nuclear translocation of NF-KappaB. Interacts (via N-terminus) with host STAT1 and JAK1; these interactions inhibit STAT1 phosphorylation by Jak1 and thereby the type I interferon signaling pathway. Interacts (via C-terminus) with host STAT2; this interaction is involved in the inhibition of the host type I interferon signaling pathway. Forms a complex with host PPP1CA and PPP1CC; this interaction prevents dephosphorylation of host IFIH1/MDA5 and leads to the inhibition of the host type I interferon signaling pathway. Interacts with host IRF9; this interaction prevents the binding of IRF9 to STAT2 and thereby the type I interferon signaling pathway. Interacts with host RIGI regulatory protein (via CARDs domain) and host TRIM25 (via SPRY domain); these interactions prevent TRIM25-mediated ubiquitination of RIG-I and disrupts downstream RIG-I signaling.

Its subcellular location is the host cytoplasm. In terms of biological role, plays an essential role in the inhibition of host immune response. Prevents the establishment of cellular antiviral state by blocking interferon-alpha/beta (IFN-alpha/beta) production and signaling pathway. Interacts with host IFIH1/MDA5 and DHX58/LGP2 to inhibit the transduction pathway involved in the activation of IFN-beta promoter, thus protecting the virus against cell antiviral state. Blocks the type I interferon signaling pathway by interacting with host TYK2 and thereby inhibiting downstream STAT1 and STAT2 phosphorylation. Blocks the type I interferon signaling pathway by disrupting the RIG-I signaling pathway. Moderately affects the type II interferon signaling. Prevents PP1alpha/gamma-mediated dephosphorylation of host IFIH1/MDA5 and thus blocks its activation. The sequence is that of Non-structural protein V (P/V) from Homo sapiens (Human).